We begin with the raw amino-acid sequence, 108 residues long: MPPKQQLSKAAKAAAALAGGKKSKKKWSKKSMKDRAQHAVILDQEKYDRILKEVPTYRYVSVSVLVDRLKIGGSLARIALRHLEKEGIIKPISKHSKQAIYTRATASE.

Low complexity predominate over residues 1 to 20; sequence MPPKQQLSKAAKAAAALAGG. The disordered stretch occupies residues 1-30; sequence MPPKQQLSKAAKAAAALAGGKKSKKKWSKK. Residue Pro2 is modified to N,N-dimethylproline; by NTM1. Positions 21 to 30 are enriched in basic residues; sequence KKSKKKWSKK.

Belongs to the eukaryotic ribosomal protein eS25 family. In terms of assembly, component of the small ribosomal subunit (SSU). Mature yeast ribosomes consist of a small (40S) and a large (60S) subunit. The 40S small subunit contains 1 molecule of ribosomal RNA (18S rRNA) and 33 different proteins (encoded by 57 genes). The large 60S subunit contains 3 rRNA molecules (25S, 5.8S and 5S rRNA) and 46 different proteins (encoded by 81 genes).

Its subcellular location is the cytoplasm. In terms of biological role, component of the ribosome, a large ribonucleoprotein complex responsible for the synthesis of proteins in the cell. The small ribosomal subunit (SSU) binds messenger RNAs (mRNAs) and translates the encoded message by selecting cognate aminoacyl-transfer RNA (tRNA) molecules. The large subunit (LSU) contains the ribosomal catalytic site termed the peptidyl transferase center (PTC), which catalyzes the formation of peptide bonds, thereby polymerizing the amino acids delivered by tRNAs into a polypeptide chain. The nascent polypeptides leave the ribosome through a tunnel in the LSU and interact with protein factors that function in enzymatic processing, targeting, and the membrane insertion of nascent chains at the exit of the ribosomal tunnel. This is Small ribosomal subunit protein eS25A from Saccharomyces cerevisiae (strain ATCC 204508 / S288c) (Baker's yeast).